A 195-amino-acid chain; its full sequence is Small ribosomal subunit protein uS10c (195 aa).

A chloroplast-targeting transit peptide spans 1 to 59 (MATSSISAALLSPLTLRNASSSSTKQDFSTLSSLNLRRTLTPTLQSGHTLSNSSNFATF).

Belongs to the universal ribosomal protein uS10 family. Component of the chloroplast small ribosomal subunit (SSU). Mature 70S chloroplast ribosomes of higher plants consist of a small (30S) and a large (50S) subunit. The 30S small subunit contains 1 molecule of ribosomal RNA (16S rRNA) and 24 different proteins. The 50S large subunit contains 3 rRNA molecules (23S, 5S and 4.5S rRNA) and 33 different proteins.

Its subcellular location is the plastid. The protein resides in the chloroplast. In terms of biological role, component of the chloroplast ribosome (chloro-ribosome), a dedicated translation machinery responsible for the synthesis of chloroplast genome-encoded proteins, including proteins of the transcription and translation machinery and components of the photosynthetic apparatus. The chain is Small ribosomal subunit protein uS10c (RPS10) from Spinacia oleracea (Spinach).